The following is a 333-amino-acid chain: DNA-directed RNA polymerase subunit alpha (333 aa).

Residues 1–233 (MVREKVRVST…DLFIPFLHAE (233 aa)) are alpha N-terminal domain (alpha-NTD). Residues 266 to 333 (KKEIAFKSIF…DILEIEKHFP (68 aa)) are alpha C-terminal domain (alpha-CTD).

The protein belongs to the RNA polymerase alpha chain family. In plastids the minimal PEP RNA polymerase catalytic core is composed of four subunits: alpha, beta, beta', and beta''. When a (nuclear-encoded) sigma factor is associated with the core the holoenzyme is formed, which can initiate transcription.

Its subcellular location is the plastid. The protein localises to the chloroplast. The catalysed reaction is RNA(n) + a ribonucleoside 5'-triphosphate = RNA(n+1) + diphosphate. DNA-dependent RNA polymerase catalyzes the transcription of DNA into RNA using the four ribonucleoside triphosphates as substrates. This is DNA-directed RNA polymerase subunit alpha from Lotus japonicus (Lotus corniculatus var. japonicus).